A 354-amino-acid chain; its full sequence is Probable cinnamyl alcohol dehydrogenase 1 (354 aa).

Cys47 contacts Zn(2+). Ser49 serves as a coordination point for NADP(+). Residues His69, Glu70, Cys100, Cys103, Cys106, Cys114, and Cys163 each contribute to the Zn(2+) site. NADP(+) is bound by residues Thr167, 188-193 (GLGGVG), 211-216 (SSSDKK), Thr251, Gly275, and 296-298 (SFI).

It belongs to the zinc-containing alcohol dehydrogenase family. As to quaternary structure, homodimer. It depends on Zn(2+) as a cofactor.

The enzyme catalyses (E)-cinnamyl alcohol + NADP(+) = (E)-cinnamaldehyde + NADPH + H(+). The catalysed reaction is (E)-coniferol + NADP(+) = (E)-coniferaldehyde + NADPH + H(+). It carries out the reaction (E)-sinapyl alcohol + NADP(+) = (E)-sinapaldehyde + NADPH + H(+). It catalyses the reaction (E)-4-coumaroyl alcohol + NADP(+) = (E)-4-coumaraldehyde + NADPH + H(+). The enzyme catalyses (E)-caffeyl alcohol + NADP(+) = (E)-caffeyl aldehyde + NADPH + H(+). The protein operates within aromatic compound metabolism; phenylpropanoid biosynthesis. Functionally, involved in lignin biosynthesis. Catalyzes the final step specific for the production of lignin monomers. Catalyzes the NADPH-dependent reduction of coniferaldehyde, 5-hydroxyconiferaldehyde, sinapaldehyde, 4-coumaraldehyde and caffeyl aldehyde to their respective alcohols. The sequence is that of Probable cinnamyl alcohol dehydrogenase 1 (CAD1) from Eucalyptus gunnii (Cider gum).